Reading from the N-terminus, the 490-residue chain is Adenylosuccinate synthetase 1, chloroplastic (490 aa).

Residues 1-47 (MSLSTLSHPAAAAAAATGSGKSHFRTAPAAQSVRFPKARPPVPAAVS) constitute a chloroplast transit peptide. Residues 14 to 36 (AAATGSGKSHFRTAPAAQSVRFP) are disordered. GTP-binding positions include 77-83 (GDEGKGK) and 105-107 (GHT). Catalysis depends on Asp-78, which acts as the Proton acceptor. Mg(2+) contacts are provided by Asp-78 and Gly-105. IMP is bound by residues 78–81 (DEGK), 103–106 (NAGH), Thr-195, Arg-209, Gln-289, Thr-304, and Arg-368. Residue His-106 is the Proton donor of the active site. Residue 364–370 (TTTGRPR) coordinates substrate. GTP-binding positions include Arg-370, 396–398 (KLD), and 479–481 (GVG).

This sequence belongs to the adenylosuccinate synthetase family. As to quaternary structure, homodimer. It depends on Mg(2+) as a cofactor.

The protein resides in the plastid. It localises to the chloroplast. It catalyses the reaction IMP + L-aspartate + GTP = N(6)-(1,2-dicarboxyethyl)-AMP + GDP + phosphate + 2 H(+). Its pathway is purine metabolism; AMP biosynthesis via de novo pathway; AMP from IMP: step 1/2. Plays an important role in the de novo pathway and in the salvage pathway of purine nucleotide biosynthesis. Catalyzes the first committed step in the biosynthesis of AMP from IMP. In Sorghum bicolor (Sorghum), this protein is Adenylosuccinate synthetase 1, chloroplastic.